We begin with the raw amino-acid sequence, 349 residues long: C-X-C chemokine receptor type 4 (349 aa).

The important for chemokine binding and signaling stretch occupies residues 1–18 (MEIYTSDNYSEEVGSGDY). Residues 1–23 (MEIYTSDNYSEEVGSGDYDSNKE) are disordered. Topologically, residues 1 to 35 (MEIYTSDNYSEEVGSGDYDSNKEPCFRDENENFNR) are extracellular. Residue Asn-8 is glycosylated (N-linked (GlcNAc...) asparagine). Tyr-9 bears the Sulfotyrosine mark. The O-linked (Xyl...) (chondroitin sulfate) serine glycan is linked to Ser-15. A Sulfotyrosine modification is found at Tyr-18. 2 disulfides stabilise this stretch: Cys-25/Cys-271 and Cys-106/Cys-183. The helical transmembrane segment at 36–60 (IFLPTIYFIIFLTGIVGNGLVILVM) threads the bilayer. Over 61–74 (GYQKKLRSMTDKYR) the chain is Cytoplasmic. Residues 75-96 (LHLSVADLLFVITLPFWAVDAM) form a helical membrane-spanning segment. The segment at 91 to 94 (WAVD) is chemokine binding. Topologically, residues 97–107 (ADWYFGKFLCK) are extracellular. The helical transmembrane segment at 108-127 (AVHIIYTVNLYSSVLILAFI) threads the bilayer. The interval 110 to 114 (HIIYT) is chemokine binding. Residues 128-151 (SLDRYLAIVHATNSQRPRKLLAEK) are Cytoplasmic-facing. The short motif at 130 to 132 (DRY) is the Important for signaling element. Residues 132 to 144 (YLAIVHATNSQRP) form an involved in dimerization; when bound to chemokine region. A helical membrane pass occupies residues 152–171 (AVYVGVWIPALLLTIPDIIF). Topologically, residues 172-192 (ADVSQGDGRYICDRLYPDSLW) are extracellular. Residues 183–187 (CDRLY) form a chemokine binding, important for signaling region. Positions 188 to 207 (PDSLWMVVFQFQHIMVGLIL) are involved in dimerization. A helical transmembrane segment spans residues 193-213 (MVVFQFQHIMVGLILPGIVIL). At 214–238 (SCYCIIISKLSHSKGHQKRKALKTT) the chain is on the cytoplasmic side. Residues 239 to 258 (VILILAFFACWLPYYVGISI) traverse the membrane as a helical segment. The Extracellular portion of the chain corresponds to 259-279 (DSFILLEVIKQGCEFESVVHK). Residues 263–265 (LLE) are involved in dimerization. The chain crosses the membrane as a helical span at residues 280–299 (WISITEALAFFHCCLNPILY). Over 300 to 349 (AFLGAKFKSSAQHALNSMSRGSSLKILSKGKRGGHSSVSTESESSSFHSS) the chain is Cytoplasmic. Residues Ser-316 and Ser-318 each carry the phosphoserine modification. Ser-321 and Ser-322 each carry phosphoserine; by PKC and GRK6. The segment at 325–349 (ILSKGKRGGHSSVSTESESSSFHSS) is disordered. Ser-327 carries the phosphoserine; by GRK6 modification. Lys-328 is covalently cross-linked (Glycyl lysine isopeptide (Lys-Gly) (interchain with G-Cter in ubiquitin)). The segment covering 334–349 (HSSVSTESESSSFHSS) has biased composition (low complexity). Ser-336 carries the post-translational modification Phosphoserine; by GRK6. Phosphoserine is present on residues Ser-345 and Ser-348.

This sequence belongs to the G-protein coupled receptor 1 family. Monomer. Can form homodimers. Interacts with CD164. Interacts with ARRB2; the interaction is dependent on the C-terminal phosphorylation of CXCR4 and allows activation of MAPK1 and MAPK3. Interacts with ARR3; the interaction is dependent on the C-terminal phosphorylation of CXCR4 and modulates calcium mobilization. Interacts with RNF113A; the interaction, enhanced by CXCL12, promotes CXCR4 ubiquitination and subsequent degradation. Interacts (via the cytoplasmic C-terminal) with ITCH (via the WW domains I and II); the interaction, enhanced by CXCL12, promotes CXCR4 ubiquitination and leads to its degradation. Interacts with extracellular ubiquitin. Interacts with DBN1; this interaction is enhanced by antigenic stimulation. Following LPS binding, may form a complex with GDF5, HSP90AA1 and HSPA8. Phosphorylated on agonist stimulation. Rapidly phosphorylated on serine and threonine residues in the C-terminal. Phosphorylation at Ser-321 and Ser-322 leads to recruitment of ITCH, ubiquitination and protein degradation. In terms of processing, ubiquitinated after ligand binding, leading to its degradation. Ubiquitinated by ITCH at the cell membrane on agonist stimulation. The ubiquitin-dependent mechanism, endosomal sorting complex required for transport (ESCRT), then targets CXCR4 for lysosomal degradation. This process is dependent also on prior Ser-/Thr-phosphorylation in the C-terminal of CXCR4. Also binding of ARRB1 to STAM negatively regulates CXCR4 sorting to lysosomes though modulating ubiquitination of SFR5S. Post-translationally, sulfation is required for efficient binding of CXCL12/SDF-1alpha and promotes its dimerization. O- and N-glycosylated. N-glycosylation can mask coreceptor function. The O-glycosylation chondroitin sulfate attachment does not affect interaction with CXCL12/SDF-1alpha nor its coreceptor activity.

The protein localises to the cell membrane. The protein resides in the cell junction. Its subcellular location is the early endosome. It is found in the late endosome. It localises to the lysosome. In terms of biological role, receptor for the C-X-C chemokine CXCL12/SDF-1 that transduces a signal by increasing intracellular calcium ion levels and enhancing MAPK1/MAPK3 activation. Involved in the AKT signaling cascade. Plays a role in regulation of cell migration, e.g. during wound healing. Acts as a receptor for extracellular ubiquitin; leading to enhanced intracellular calcium ions and reduced cellular cAMP levels. Binds bacterial lipopolysaccharide (LPS) et mediates LPS-induced inflammatory response, including TNF secretion by monocytes. Involved in hematopoiesis and in cardiac ventricular septum formation. Also plays an essential role in vascularization of the gastrointestinal tract, probably by regulating vascular branching and/or remodeling processes in endothelial cells. Involved in cerebellar development. In the CNS, could mediate hippocampal-neuron survival. The protein is C-X-C chemokine receptor type 4 (Cxcr4) of Rattus norvegicus (Rat).